A 282-amino-acid chain; its full sequence is Elongation factor Ts (282 aa).

The tract at residues 80-83 (TDFV) is involved in Mg(2+) ion dislocation from EF-Tu.

Belongs to the EF-Ts family.

The protein localises to the cytoplasm. In terms of biological role, associates with the EF-Tu.GDP complex and induces the exchange of GDP to GTP. It remains bound to the aminoacyl-tRNA.EF-Tu.GTP complex up to the GTP hydrolysis stage on the ribosome. This chain is Elongation factor Ts, found in Chlamydia caviae (strain ATCC VR-813 / DSM 19441 / 03DC25 / GPIC) (Chlamydophila caviae).